Consider the following 345-residue polypeptide: NADH-quinone oxidoreductase subunit H (345 aa).

Transmembrane regions (helical) follow at residues 14–34 (IILA…LFLV), 84–104 (FILA…VIPF), 115–135 (VAIL…IMGG), 161–181 (IGLI…GDIV), 187–207 (GWGF…LFFI), 248–268 (YIAI…GWLS), 277–297 (VLWM…VKAI), and 309–329 (LGWK…AFAA).

This sequence belongs to the complex I subunit 1 family. NDH-1 is composed of 14 different subunits. Subunits NuoA, H, J, K, L, M, N constitute the membrane sector of the complex.

It is found in the cell inner membrane. The catalysed reaction is a quinone + NADH + 5 H(+)(in) = a quinol + NAD(+) + 4 H(+)(out). NDH-1 shuttles electrons from NADH, via FMN and iron-sulfur (Fe-S) centers, to quinones in the respiratory chain. The immediate electron acceptor for the enzyme in this species is believed to be ubiquinone. Couples the redox reaction to proton translocation (for every two electrons transferred, four hydrogen ions are translocated across the cytoplasmic membrane), and thus conserves the redox energy in a proton gradient. This subunit may bind ubiquinone. This chain is NADH-quinone oxidoreductase subunit H, found in Ruegeria pomeroyi (strain ATCC 700808 / DSM 15171 / DSS-3) (Silicibacter pomeroyi).